The sequence spans 175 residues: Ribosome maturation factor RimM (175 aa).

The PRC barrel domain maps to 96–172 (PDTYYDHQLE…LIEIDPPDGL (77 aa)).

It belongs to the RimM family. As to quaternary structure, binds ribosomal protein uS19.

It is found in the cytoplasm. In terms of biological role, an accessory protein needed during the final step in the assembly of 30S ribosomal subunit, possibly for assembly of the head region. Essential for efficient processing of 16S rRNA. May be needed both before and after RbfA during the maturation of 16S rRNA. It has affinity for free ribosomal 30S subunits but not for 70S ribosomes. The chain is Ribosome maturation factor RimM from Mycobacterium avium (strain 104).